The chain runs to 162 residues: SCF ubiquitin ligase complex protein SKP1b (162 aa).

S2 is subject to N-acetylserine. Residues 100–162 (ILAANYLDIK…NEWCEDKGGN (63 aa)) are interaction with the F-box domain of F-box proteins. The residue at position 143 (P143) is a 4-hydroxyproline. P143 carries an O-linked (GlcNAc...) hydroxyproline glycan.

This sequence belongs to the SKP1 family. In terms of assembly, multiprotein complex (SCF) with cullin and F-box-containing protein. Capable of undergoing aggregation. O-linked glycan consists of linear Gal-Gal-Fuc-Gal-GlcNAc. In terms of processing, not glycosylated in prespore cells. Post-translationally, fpaA and fpaB seem to be identically glycosylated. Glycosylation is required for nuclear enrichment. Hydroxylated by phyA.

It localises to the cytoplasm. The protein resides in the nucleus. This chain is SCF ubiquitin ligase complex protein SKP1b (fpaB-1), found in Dictyostelium discoideum (Social amoeba).